Here is a 426-residue protein sequence, read N- to C-terminus: Phytoene synthase 3, chloroplastic (426 aa).

The N-terminal 52 residues, 1–52, are a transit peptide targeting the chloroplast; it reads MMSTSRAVKSPACAARRRQWSADAPNRTATFLACRHGRRLGGGGGAPCSVRA.

It belongs to the phytoene/squalene synthase family. As to expression, expressed in roots and endosperm.

The protein resides in the plastid. It is found in the chloroplast. Its subcellular location is the plastoglobule. It carries out the reaction 2 (2E,6E,10E)-geranylgeranyl diphosphate = 15-cis-phytoene + 2 diphosphate. Functionally, catalyzes the conversion of geranylgeranyl diphosphate to phytoene. Mediates the first committed step in carotenoid biosynthesis. May play a role in regulating carotenoid flux in response to abiotic stress in roots. May control flux to carotenoid precursors that are required for abiotic stress-induced abscisic acid (ABA) formation in roots. The sequence is that of Phytoene synthase 3, chloroplastic from Zea mays (Maize).